The sequence spans 65 residues: Small, acid-soluble spore protein C3 (65 aa).

It belongs to the alpha/beta-type SASP family.

SASP are bound to spore DNA. They are double-stranded DNA-binding proteins that cause DNA to change to an a-like conformation. They protect the DNA backbone from chemical and enzymatic cleavage and are thus involved in dormant spore's high resistance to UV light. This Priestia megaterium (Bacillus megaterium) protein is Small, acid-soluble spore protein C3 (SASP-C3).